A 169-amino-acid chain; its full sequence is Large ribosomal subunit protein uL15 (169 aa).

Residues 1-13 (MKLNEIRDNEGAT) are compositionally biased toward basic and acidic residues. The interval 1-40 (MKLNEIRDNEGATKNRMRVGRGIGSGKGKTGGRGVKGQKA) is disordered. Positions 21–35 (RGIGSGKGKTGGRGV) are enriched in gly residues.

This sequence belongs to the universal ribosomal protein uL15 family. As to quaternary structure, part of the 50S ribosomal subunit.

Binds to the 23S rRNA. In Methylorubrum populi (strain ATCC BAA-705 / NCIMB 13946 / BJ001) (Methylobacterium populi), this protein is Large ribosomal subunit protein uL15.